The following is a 1051-amino-acid chain: Ubiquitin carboxyl-terminal hydrolase 28 (1051 aa).

Positions 60–82 (DQRVKEPSHDTTAAEPSEVEESA) are disordered. A Phosphoserine modification is found at serine 67. The 20-residue stretch at 97–116 (DNKDDLQAAIALSLLESPNI) folds into the UIM domain. Lysine 99 is covalently cross-linked (Glycyl lysine isopeptide (Lys-Gly) (interchain with G-Cter in SUMO2)). Over residues 121–135 (RDLNRAHEANSAETK) the composition is skewed to basic and acidic residues. Positions 121-140 (RDLNRAHEANSAETKRSKRK) are disordered. Positions 162–655 (VGLKNVGNTC…SAYCLMYIND (494 aa)) constitute a USP domain. Cysteine 171 functions as the Nucleophile in the catalytic mechanism. Phosphoserine is present on serine 376. The disordered stretch occupies residues 483–538 (DLTPKESSSPESCSQNAGSTFSSPEDALPSSEGMNGPFTSPHSSLETPAPPAPRTV). Composition is skewed to polar residues over residues 487–505 (KESSSPESCSQNAGSTFSS) and 519–528 (PFTSPHSSLE). Serine 555 carries the phosphoserine modification. The active-site Proton acceptor is the histidine 605. The tract at residues 703–735 (EEQSCKIPQMESSPNSSSQDFSTSQESPAVSSH) is disordered. Low complexity predominate over residues 713–730 (ESSPNSSSQDFSTSQESP). Serine 720 bears the Phosphoserine mark. Threonine 1022 carries the phosphothreonine modification.

This sequence belongs to the peptidase C19 family. USP28 subfamily. Interacts with ZNF304. Interacts with PRKD1. Interacts with TP53BP1. Interacts with FBXW7; following DNA damage, dissociates from FBXW7 leading to degradation of MYC. In terms of processing, degraded upon nickel ion level or hypoxia exposure. Phosphorylated upon DNA damage at Ser-67 and Ser-720, by ATM or ATR. Phosphorylated by PRKD1.

The protein localises to the nucleus. The protein resides in the nucleoplasm. The enzyme catalyses Thiol-dependent hydrolysis of ester, thioester, amide, peptide and isopeptide bonds formed by the C-terminal Gly of ubiquitin (a 76-residue protein attached to proteins as an intracellular targeting signal).. Functionally, deubiquitinase involved in DNA damage response checkpoint and MYC proto-oncogene stability. Involved in DNA damage induced apoptosis by specifically deubiquitinating proteins of the DNA damage pathway such as CLSPN. Also involved in G2 DNA damage checkpoint, by deubiquitinating CLSPN, and preventing its degradation by the anaphase promoting complex/cyclosome (APC/C). In contrast, it does not deubiquitinate PLK1. Specifically deubiquitinates MYC in the nucleoplasm, leading to prevent MYC degradation by the proteasome: acts by specifically interacting with FBXW7 (FBW7alpha) in the nucleoplasm and counteracting ubiquitination of MYC by the SCF(FBXW7) complex. Deubiquitinates ZNF304, hence preventing ZNF304 degradation by the proteasome and leading to the activated KRAS-mediated promoter hypermethylation and transcriptional silencing of tumor suppressor genes (TSGs) in a subset of colorectal cancers (CRC) cells. The chain is Ubiquitin carboxyl-terminal hydrolase 28 (Usp28) from Mus musculus (Mouse).